A 199-amino-acid polypeptide reads, in one-letter code: ATP-dependent Clp protease proteolytic subunit (199 aa).

Residue S97 is the Nucleophile of the active site. The active site involves H122.

This sequence belongs to the peptidase S14 family. In terms of assembly, fourteen ClpP subunits assemble into 2 heptameric rings which stack back to back to give a disk-like structure with a central cavity, resembling the structure of eukaryotic proteasomes.

The protein localises to the cytoplasm. It carries out the reaction Hydrolysis of proteins to small peptides in the presence of ATP and magnesium. alpha-casein is the usual test substrate. In the absence of ATP, only oligopeptides shorter than five residues are hydrolyzed (such as succinyl-Leu-Tyr-|-NHMec, and Leu-Tyr-Leu-|-Tyr-Trp, in which cleavage of the -Tyr-|-Leu- and -Tyr-|-Trp bonds also occurs).. Functionally, cleaves peptides in various proteins in a process that requires ATP hydrolysis. Has a chymotrypsin-like activity. Plays a major role in the degradation of misfolded proteins. The protein is ATP-dependent Clp protease proteolytic subunit of Geobacter metallireducens (strain ATCC 53774 / DSM 7210 / GS-15).